The primary structure comprises 406 residues: Arginine biosynthesis bifunctional protein ArgJ (406 aa).

Residues T156, K182, T193, E279, N401, and T406 each contribute to the substrate site. T193 (nucleophile) is an active-site residue.

Belongs to the ArgJ family. As to quaternary structure, heterotetramer of two alpha and two beta chains.

Its subcellular location is the cytoplasm. The catalysed reaction is N(2)-acetyl-L-ornithine + L-glutamate = N-acetyl-L-glutamate + L-ornithine. It carries out the reaction L-glutamate + acetyl-CoA = N-acetyl-L-glutamate + CoA + H(+). Its pathway is amino-acid biosynthesis; L-arginine biosynthesis; L-ornithine and N-acetyl-L-glutamate from L-glutamate and N(2)-acetyl-L-ornithine (cyclic): step 1/1. It participates in amino-acid biosynthesis; L-arginine biosynthesis; N(2)-acetyl-L-ornithine from L-glutamate: step 1/4. With respect to regulation, feedback inhibition by L-arginine. Catalyzes two activities which are involved in the cyclic version of arginine biosynthesis: the synthesis of N-acetylglutamate from glutamate and acetyl-CoA as the acetyl donor, and of ornithine by transacetylation between N(2)-acetylornithine and glutamate. This is Arginine biosynthesis bifunctional protein ArgJ from Bacillus amyloliquefaciens (Bacillus velezensis).